Here is a 161-residue protein sequence, read N- to C-terminus: V-type proton ATPase 16 kDa proteolipid subunit c 2 (161 aa).

Over 1–15 (MSYDLETAEHAAYAP) the chain is Lumenal. Residues 16–36 (FFGYMGAASAQIFTVLGAAYG) form a helical membrane-spanning segment. The Cytoplasmic portion of the chain corresponds to 37-58 (TAKSAVGICSMGVMRPELIMKS). Residues 59–79 (VIPVIMAGIIGIYGLVVAMVL) traverse the membrane as a helical segment. The Lumenal segment spans residues 80–98 (KGKVQAASAGYDLNKGFAH). A helical transmembrane segment spans residues 99–119 (LAAGLTCGLCGLGAGYAIGIV). Over 120 to 137 (GDAGVRGTAQQPRLFVGM) the chain is Cytoplasmic. Residues 138–158 (ILILIFSEVLGLYGMIVALIL) traverse the membrane as a helical segment. Residues 159 to 161 (GTS) lie on the Lumenal side of the membrane.

It belongs to the V-ATPase proteolipid subunit family. V-ATPase is a heteromultimeric enzyme made up of two complexes: the ATP-hydrolytic V1 complex and the proton translocation V0 complex. The V1 complex consists of three catalytic AB heterodimers that form a heterohexamer, three peripheral stalks each consisting of EG heterodimers, one central rotor including subunits D and F, and the regulatory subunits C and H. The proton translocation complex V0 consists of the proton transport subunit a, a ring of proteolipid subunits c9c'', rotary subunit d, subunits e and f, and the accessory subunits vah-19/Ac45 and vah-20/PRR.

Its subcellular location is the membrane. Its function is as follows. Proton-conducting pore forming subunit of the V0 complex of vacuolar(H+)-ATPase (V-ATPase), a multisubunit enzyme composed of a peripheral complex (V1) that hydrolyzes ATP and a membrane integral complex (V0) that translocates protons. V-ATPase is responsible for acidifying and maintaining the pH of intracellular compartments and in some cell types, is targeted to the plasma membrane, where it is responsible for acidifying the extracellular environment. Involved in necrotic cell death. Required along with other vacuolar ATPase components for the removal of protein aggregates which form in immature oocytes in the distal gonad. This removal occurs as the oocytes mature and move to the proximal gonad, is triggered by the introduction of sperm through mating and occurs before fertilization. The introduction of sperm triggers V-ATPase accumulation in proximal oocytes and induces lysosomal acidification which leads to engulfing of protein aggregates by lysosomes and subsequent clearance of the aggregates. Lysosomal acidification also leads to changes in mitochondrial morphology and function. Mitochondria in distal immature oocytes are fragmented, produce high levels of reactive oxygen species (ROS) and have high membrane potential, indicative of metabolic inactivity. In contrast, mitochondria in proximal mature oocytes are tubular with lower ROS levels and membrane potential, indicative of an active metabolic state required for aggregate mobilization before clearance. The sequence is that of V-type proton ATPase 16 kDa proteolipid subunit c 2 from Caenorhabditis briggsae.